The primary structure comprises 164 residues: Crossover junction endodeoxyribonuclease RuvC (164 aa).

Residues D7, E67, and D140 contribute to the active site. 3 residues coordinate Mg(2+): D7, E67, and D140.

It belongs to the RuvC family. As to quaternary structure, homodimer which binds Holliday junction (HJ) DNA. The HJ becomes 2-fold symmetrical on binding to RuvC with unstacked arms; it has a different conformation from HJ DNA in complex with RuvA. In the full resolvosome a probable DNA-RuvA(4)-RuvB(12)-RuvC(2) complex forms which resolves the HJ. Mg(2+) is required as a cofactor.

It is found in the cytoplasm. It catalyses the reaction Endonucleolytic cleavage at a junction such as a reciprocal single-stranded crossover between two homologous DNA duplexes (Holliday junction).. Functionally, the RuvA-RuvB-RuvC complex processes Holliday junction (HJ) DNA during genetic recombination and DNA repair. Endonuclease that resolves HJ intermediates. Cleaves cruciform DNA by making single-stranded nicks across the HJ at symmetrical positions within the homologous arms, yielding a 5'-phosphate and a 3'-hydroxyl group; requires a central core of homology in the junction. The consensus cleavage sequence is 5'-(A/T)TT(C/G)-3'. Cleavage occurs on the 3'-side of the TT dinucleotide at the point of strand exchange. HJ branch migration catalyzed by RuvA-RuvB allows RuvC to scan DNA until it finds its consensus sequence, where it cleaves and resolves the cruciform DNA. This is Crossover junction endodeoxyribonuclease RuvC from Pelotomaculum thermopropionicum (strain DSM 13744 / JCM 10971 / SI).